We begin with the raw amino-acid sequence, 160 residues long: Probable NADH dehydrogenase [ubiquinone] 1 beta subcomplex subunit 2, mitochondrial (160 aa).

Belongs to the complex I NDUFB2 subunit family. Complex I is composed of 45 different subunits.

The protein resides in the mitochondrion inner membrane. Functionally, accessory subunit of the mitochondrial membrane respiratory chain NADH dehydrogenase (Complex I), that is believed not to be involved in catalysis. Complex I functions in the transfer of electrons from NADH to the respiratory chain. The immediate electron acceptor for the enzyme is believed to be ubiquinone. The sequence is that of Probable NADH dehydrogenase [ubiquinone] 1 beta subcomplex subunit 2, mitochondrial from Caenorhabditis briggsae.